Consider the following 96-residue polypeptide: Large ribosomal subunit protein uL15 (96 aa).

Belongs to the universal ribosomal protein uL15 family. Part of the 50S ribosomal subunit.

Binds to the 23S rRNA. The protein is Large ribosomal subunit protein uL15 (rplO) of Streptomyces scabiei.